The chain runs to 127 residues: UPF0102 protein Gura_3756 (127 aa).

This sequence belongs to the UPF0102 family.

The protein is UPF0102 protein Gura_3756 of Geotalea uraniireducens (strain Rf4) (Geobacter uraniireducens).